Here is a 631-residue protein sequence, read N- to C-terminus: ESX-3 secretion system protein EccA3 (631 aa).

385–392 (GPPGTGKT) contacts ATP.

Belongs to the CbxX/CfxQ family. Part of the ESX-3 / type VII secretion system (T7SS), which is composed of cytosolic and membrane components.

Its subcellular location is the cytoplasm. In terms of biological role, part of the ESX-3 specialized secretion system, which is important for iron and zinc uptake or homeostasis. EccA3 exhibits ATPase activity and may provide energy for the export of ESX-3 substrates. The chain is ESX-3 secretion system protein EccA3 from Mycobacterium tuberculosis (strain CDC 1551 / Oshkosh).